Here is a 361-residue protein sequence, read N- to C-terminus: Ribosomal RNA small subunit methyltransferase H (361 aa).

Residues 54–56 (GGH), D74, Y101, D122, and Q129 each bind S-adenosyl-L-methionine. The interval 318–361 (ARNSRASSAKLRAAQRLAEGQAPRPRRRNKYAPEGRDEPEGGAA) is disordered. Over residues 348 to 361 (YAPEGRDEPEGGAA) the composition is skewed to basic and acidic residues.

Belongs to the methyltransferase superfamily. RsmH family.

Its subcellular location is the cytoplasm. It carries out the reaction cytidine(1402) in 16S rRNA + S-adenosyl-L-methionine = N(4)-methylcytidine(1402) in 16S rRNA + S-adenosyl-L-homocysteine + H(+). Specifically methylates the N4 position of cytidine in position 1402 (C1402) of 16S rRNA. This is Ribosomal RNA small subunit methyltransferase H from Nitratidesulfovibrio vulgaris (strain DSM 19637 / Miyazaki F) (Desulfovibrio vulgaris).